Consider the following 89-residue polypeptide: Small ribosomal subunit protein uS19 (89 aa).

It belongs to the universal ribosomal protein uS19 family.

Functionally, protein S19 forms a complex with S13 that binds strongly to the 16S ribosomal RNA. This Xylella fastidiosa (strain M23) protein is Small ribosomal subunit protein uS19.